Here is a 500-residue protein sequence, read N- to C-terminus: Aldehyde dehydrogenase, mitochondrial (500 aa).

Residues Lys-35, Lys-56, Lys-61, and Lys-142 each carry the N6-acetyllysine modification. 245 to 250 is an NAD(+) binding site; the sequence is GSTEVG. Glu-268 serves as the catalytic Proton acceptor. Residue Cys-302 is the Nucleophile of the active site. Lys-351, Lys-358, Lys-366, Lys-390, Lys-409, Lys-411, Lys-424, and Lys-434 each carry N6-acetyllysine.

It belongs to the aldehyde dehydrogenase family. Homotetramer. Post-translationally, in response to mitochondrial stress, the precursor protein is ubiquitinated by the SIFI complex in the cytoplasm before mitochondrial import, leading to its degradation. Within the SIFI complex, UBR4 initiates ubiquitin chain that are further elongated or branched by KCMF1.

It localises to the mitochondrion matrix. It catalyses the reaction an aldehyde + NAD(+) + H2O = a carboxylate + NADH + 2 H(+). The protein operates within alcohol metabolism; ethanol degradation; acetate from ethanol: step 2/2. Required for clearance of cellular formaldehyde, a cytotoxic and carcinogenic metabolite that induces DNA damage. This is Aldehyde dehydrogenase, mitochondrial (ALDH2) from Mesocricetus auratus (Golden hamster).